Consider the following 418-residue polypeptide: Diacylglycerol O-acyltransferase 1 (418 aa).

Residues 1-30 (MSGTFNDIRRRKKEEGSPTAGITERHENKS) are disordered. The Cytoplasmic portion of the chain corresponds to 1-71 (MSGTFNDIRR…LAVAWHTSSF (71 aa)). Ser17 carries the phosphoserine modification. The chain crosses the membrane as a helical span at residues 72 to 92 (VLFSIFTLFAISTPALWVLAI). Over 93 to 186 (PYMIYFFFDR…DYRNQECTGP (94 aa)) the chain is Lumenal. Asn173 is a glycosylation site (N-linked (GlcNAc...) asparagine). The helical transmembrane segment at 187 to 207 (TYLFGYHPHGIGALGAFGAFA) threads the bilayer. The Cytoplasmic segment spans residues 208-215 (TEGCNYSK). The chain crosses the membrane as a helical span at residues 216–236 (IFPGIPISLMTLVTQFHIPLY). At 237–289 (RDYLLALGISSVSRKNALRTLSKNQSICIVVGGARESLLSSTNGTQLILNKRK) the chain is on the lumenal side. 2 N-linked (GlcNAc...) asparagine glycosylation sites follow: Asn260 and Asn279. The chain crosses the membrane as a helical span at residues 290 to 310 (GFIKLAIQTGNINLVPVFAFG). Residues 311-418 (EVDCYNVLST…VPDAELKIVG (108 aa)) are Cytoplasmic-facing.

It belongs to the diacylglycerol acyltransferase family.

It is found in the lipid droplet. The protein resides in the endoplasmic reticulum membrane. It catalyses the reaction an acyl-CoA + a 1,2-diacyl-sn-glycerol = a triacyl-sn-glycerol + CoA. The enzyme catalyses a 2-acylglycerol + an acyl-CoA = a 1,2-diacylglycerol + CoA. The catalysed reaction is 2-(9Z-octadecenoyl)-glycerol + (9Z)-octadecenoyl-CoA = 1,2-di-(9Z-octadecenoyl)-glycerol + CoA. The protein operates within glycerolipid metabolism; triacylglycerol biosynthesis. Catalyzes the terminal and only committed step in triacylglycerol (TAG) synthesis by using diacylglycerol (DAG) and fatty acyl-CoA as substrates. Required for storage lipid synthesis. Major DAG esterifying enzyme in stationary phase when TAG production is particularly active. Involved in lipid particle synthesis from the endoplasmic reticulum, promoting localized TAG production at discrete ER subdomains, and in ergosterol biosynthesis. Also has monoacylglycerol acyltransferase (MGAT) activity, catalyzing the acyl-CoA-dependent esterification of monoacylglycerol to diacylglycerol. Can also utilize ceramide instead of DAG, acylating the ceramides by attaching a fatty acid to the hydroxy group on the first carbon atom of the long-chain base to produce 1-O-acylceramides. This chain is Diacylglycerol O-acyltransferase 1 (DGA1), found in Saccharomyces cerevisiae (strain ATCC 204508 / S288c) (Baker's yeast).